A 594-amino-acid polypeptide reads, in one-letter code: uncharacterized protein (594 aa).

Positions Cys-11–Cys-38 form a DNA-binding region, zn(2)-C6 fungal-type. Residues Tyr-503–Val-523 form a helical membrane-spanning segment.

The protein resides in the nucleus. The protein localises to the membrane. This is an uncharacterized protein from Schizosaccharomyces pombe (strain 972 / ATCC 24843) (Fission yeast).